A 250-amino-acid polypeptide reads, in one-letter code: Cyclin-Q (250 aa).

Met1 carries the N-acetylmethionine modification. The span at 1–10 shows a compositional bias: basic and acidic residues; it reads MEAVRPDSCE. Residues 1–22 form a disordered region; the sequence is MEAVRPDSCERGTAAARAEERP.

It belongs to the cyclin family. Cyclin-like FAM58 subfamily. Associates with CDK10 to promote its kinase activity.

Functionally, activating cyclin for the cyclin-associated kinase CDK10. The chain is Cyclin-Q (Ccnq) from Rattus norvegicus (Rat).